The following is an 87-amino-acid chain: Small ribosomal subunit protein bS20 (87 aa).

Residues Met-1–Lys-22 are disordered.

The protein belongs to the bacterial ribosomal protein bS20 family.

In terms of biological role, binds directly to 16S ribosomal RNA. The protein is Small ribosomal subunit protein bS20 of Ruegeria sp. (strain TM1040) (Silicibacter sp.).